An 86-amino-acid polypeptide reads, in one-letter code: Centromere protein W (86 aa).

Belongs to the CENP-W/WIP1 family. In terms of assembly, heterodimer with CENPT; this dimer coassembles with CENPS-CENPX heterodimers at centromeres to form the tetrameric CENP-T-W-S-X complex, which is a subcomplex of the large constitutive centromere-associated network (CCAN, also known as the interphase centromere complex or ICEN). Interacts with NPM1.

It localises to the nucleus. The protein resides in the chromosome. It is found in the centromere. Its subcellular location is the kinetochore. The protein localises to the nucleus matrix. It localises to the nucleolus. Functionally, component of the CENPA-NAC (nucleosome-associated) complex, a complex that plays a central role in assembly of kinetochore proteins, mitotic progression and chromosome segregation. The CENPA-NAC complex recruits the CENPA-CAD (nucleosome distal) complex and may be involved in incorporation of newly synthesized CENPA into centromeres. Part of a nucleosome-associated complex that binds specifically to histone H3-containing nucleosomes at the centromere, as opposed to nucleosomes containing CENPA. Component of the heterotetrameric CENP-T-W-S-X complex that binds and supercoils DNA, and plays an important role in kinetochore assembly. CENPW has a fundamental role in kinetochore assembly and function. It is one of the inner kinetochore proteins, with most further proteins binding downstream. Required for normal chromosome organization and normal progress through mitosis. The polypeptide is Centromere protein W (Cenpw) (Rattus norvegicus (Rat)).